We begin with the raw amino-acid sequence, 183 residues long: uncharacterized protein (183 aa).

This is an uncharacterized protein from Archaeoglobus fulgidus (strain ATCC 49558 / DSM 4304 / JCM 9628 / NBRC 100126 / VC-16).